A 342-amino-acid polypeptide reads, in one-letter code: GTPase Obg (342 aa).

The region spanning 1–159 (MQFIDQAQIE…KLLRLELKLL (159 aa)) is the Obg domain. The OBG-type G domain maps to 160–330 (AEVGIIGLPN…MLQEVWGILD (171 aa)). GTP contacts are provided by residues 166–173 (GLPNAGKS), 191–195 (FTTLI), 213–216 (DIPG), 280–283 (NKID), and 311–313 (SAV). S173 and T193 together coordinate Mg(2+).

Belongs to the TRAFAC class OBG-HflX-like GTPase superfamily. OBG GTPase family. In terms of assembly, monomer. It depends on Mg(2+) as a cofactor.

The protein resides in the cytoplasm. Its function is as follows. An essential GTPase which binds GTP, GDP and possibly (p)ppGpp with moderate affinity, with high nucleotide exchange rates and a fairly low GTP hydrolysis rate. Plays a role in control of the cell cycle, stress response, ribosome biogenesis and in those bacteria that undergo differentiation, in morphogenesis control. The chain is GTPase Obg from Nostoc sp. (strain PCC 7120 / SAG 25.82 / UTEX 2576).